The sequence spans 412 residues: Decapping nuclease RAI1 (412 aa).

An a divalent metal cation-binding site is contributed by Glu-196. Substrate is bound by residues Cys-228 and Glu-245. Residues Asp-247, Glu-265, and Leu-266 each coordinate a divalent metal cation. Substrate contacts are provided by Lys-267 and Gln-291.

Belongs to the DXO/Dom3Z family. As to quaternary structure, interacts with exr-1/rat1; the interaction is direct, stabilizes exr-1 protein structure and stimulates its exoribonuclease activity. The interaction also stimulates rai1 pyrophosphohydrolase activity, probably by recruiting it to mRNA substrates. The cofactor is a divalent metal cation.

It localises to the nucleus. The enzyme catalyses a 5'-end NAD(+)-phospho-ribonucleoside in mRNA + H2O = a 5'-end phospho-ribonucleoside in mRNA + NAD(+) + H(+). It catalyses the reaction a 5'-end (N(7)-methyl 5'-triphosphoguanosine)-ribonucleoside-ribonucleotide in mRNA + H2O = a (N(7)-methyl 5'-triphosphoguanosine)-nucleoside + a 5'-end phospho-ribonucleoside in mRNA + H(+). It carries out the reaction a 5'-end triphospho-ribonucleoside in mRNA + H2O = a 5'-end phospho-ribonucleoside in mRNA + diphosphate + H(+). In terms of biological role, decapping enzyme for NAD-capped RNAs: specifically hydrolyzes the nicotinamide adenine dinucleotide (NAD) cap from a subset of RNAs by removing the entire NAD moiety from the 5'-end of an NAD-capped RNA. The NAD-cap is present at the 5'-end of some RNAs and snoRNAs. In contrast to the canonical 5'-end N7 methylguanosine (m7G) cap, the NAD cap promotes mRNA decay. Also acts as a non-canonical decapping enzyme that removes the entire cap structure of m7G capped or incompletely capped RNAs. Has decapping activity toward incomplete 5'-end m7G cap mRNAs such as unmethylated 5'-end-capped RNA (cap0), while it has no activity toward 2'-O-ribose methylated m7G cap (cap1). Also possesses RNA 5'-pyrophosphohydrolase activity by hydrolyzing the 5'-end triphosphate to release pyrophosphates. Stimulates exoribonuclease activity of Rat1, allowing it to degrade RNAs with stable secondary structure more effectively. In Neurospora crassa (strain ATCC 24698 / 74-OR23-1A / CBS 708.71 / DSM 1257 / FGSC 987), this protein is Decapping nuclease RAI1 (rai1).